We begin with the raw amino-acid sequence, 622 residues long: 1-deoxy-D-xylulose-5-phosphate synthase (622 aa).

Thiamine diphosphate contacts are provided by residues His-80 and 121 to 123; that span reads GHS. A Mg(2+)-binding site is contributed by Asp-152. Thiamine diphosphate is bound by residues 153-154, Asn-181, Tyr-288, and Glu-370; that span reads GA. Asn-181 is a binding site for Mg(2+).

This sequence belongs to the transketolase family. DXPS subfamily. In terms of assembly, homodimer. Requires Mg(2+) as cofactor. The cofactor is thiamine diphosphate.

The enzyme catalyses D-glyceraldehyde 3-phosphate + pyruvate + H(+) = 1-deoxy-D-xylulose 5-phosphate + CO2. Its pathway is metabolic intermediate biosynthesis; 1-deoxy-D-xylulose 5-phosphate biosynthesis; 1-deoxy-D-xylulose 5-phosphate from D-glyceraldehyde 3-phosphate and pyruvate: step 1/1. Functionally, catalyzes the acyloin condensation reaction between C atoms 2 and 3 of pyruvate and glyceraldehyde 3-phosphate to yield 1-deoxy-D-xylulose-5-phosphate (DXP). In Shewanella loihica (strain ATCC BAA-1088 / PV-4), this protein is 1-deoxy-D-xylulose-5-phosphate synthase.